A 727-amino-acid chain; its full sequence is Cadmium-transporting ATPase (727 aa).

An HMA domain is found at 12 to 75 (EMNVYRVQGF…AGAFENLKVS (64 aa)). Residues Cys23 and Cys26 each contribute to the Cd(2+) site. The next 5 helical transmembrane spans lie at 106 to 126 (STLLFATLLIAFGYLSHFVNG), 130 to 150 (LVTSMLFVGSIVIGGYSLFKV), 171 to 191 (IGATIIGKWAEASIVVILFAI), 336 to 356 (IIMVIAALVAVVPPLFFGGSW), and 364 to 384 (LAVLVVGCPCALVISTPISIV). Asp415 functions as the 4-aspartylphosphate intermediate in the catalytic mechanism. 2 helical membrane-spanning segments follow: residues 672-694 (LNIIKANITFAIGIKIIALLLVI) and 699-721 (TLWIAILSDMGATILVALNSLRL).

The protein belongs to the cation transport ATPase (P-type) (TC 3.A.3) family. Type IB subfamily.

Its subcellular location is the cell membrane. It carries out the reaction Cd(2+)(in) + ATP + H2O = Cd(2+)(out) + ADP + phosphate + H(+). With respect to regulation, inhibited by the antibiotic bafilomycin A1. Partially inhibited by DCCD, nigericin and FCCP. Couples the hydrolysis of ATP with the export of cadmium. Involved in cadmium resistance. This chain is Cadmium-transporting ATPase, found in Staphylococcus aureus.